The sequence spans 705 residues: Elongation factor G (705 aa).

The tr-type G domain maps to 7 to 287 (HLTRNIGIMA…YVCAFLPSPL (281 aa)). Residues 16 to 23 (AHIDAGKT), 84 to 88 (DTPGH), and 138 to 141 (NKMD) each bind GTP. The interval 293–312 (VGTNPTTGAEEDRKPSEDEK) is disordered. Basic and acidic residues predominate over residues 302 to 312 (EEDRKPSEDEK).

The protein belongs to the TRAFAC class translation factor GTPase superfamily. Classic translation factor GTPase family. EF-G/EF-2 subfamily.

Its subcellular location is the cytoplasm. Catalyzes the GTP-dependent ribosomal translocation step during translation elongation. During this step, the ribosome changes from the pre-translocational (PRE) to the post-translocational (POST) state as the newly formed A-site-bound peptidyl-tRNA and P-site-bound deacylated tRNA move to the P and E sites, respectively. Catalyzes the coordinated movement of the two tRNA molecules, the mRNA and conformational changes in the ribosome. The sequence is that of Elongation factor G from Phocaeicola vulgatus (strain ATCC 8482 / DSM 1447 / JCM 5826 / CCUG 4940 / NBRC 14291 / NCTC 11154) (Bacteroides vulgatus).